Reading from the N-terminus, the 185-residue chain is Adenine phosphoribosyltransferase (185 aa).

This sequence belongs to the purine/pyrimidine phosphoribosyltransferase family. Homodimer.

Its subcellular location is the cytoplasm. It catalyses the reaction AMP + diphosphate = 5-phospho-alpha-D-ribose 1-diphosphate + adenine. The protein operates within purine metabolism; AMP biosynthesis via salvage pathway; AMP from adenine: step 1/1. Its function is as follows. Catalyzes a salvage reaction resulting in the formation of AMP, that is energically less costly than de novo synthesis. The protein is Adenine phosphoribosyltransferase of Nocardioides sp. (strain ATCC BAA-499 / JS614).